The chain runs to 119 residues: MEAKAILRDTPTSPRKMRLVAGLVRGKPVDLAKAILLNSTKAASRNVMMTLKSAVANYAQRNPDERVSDQELFVKTIFVDEGTTLKRTLPAPMGRAFRIRKRSNHLTIVIDKVKNPVTK.

Belongs to the universal ribosomal protein uL22 family. As to quaternary structure, part of the 50S ribosomal subunit.

Its function is as follows. This protein binds specifically to 23S rRNA; its binding is stimulated by other ribosomal proteins, e.g. L4, L17, and L20. It is important during the early stages of 50S assembly. It makes multiple contacts with different domains of the 23S rRNA in the assembled 50S subunit and ribosome. The globular domain of the protein is located near the polypeptide exit tunnel on the outside of the subunit, while an extended beta-hairpin is found that lines the wall of the exit tunnel in the center of the 70S ribosome. In Pelodictyon phaeoclathratiforme (strain DSM 5477 / BU-1), this protein is Large ribosomal subunit protein uL22.